Here is a 389-residue protein sequence, read N- to C-terminus: Na(+)/H(+) antiporter NhaA (389 aa).

A run of 11 helical transmembrane segments spans residues 24–44, 56–76, 94–114, 122–142, 152–172, 176–196, 216–236, 259–279, 291–311, 326–346, and 363–383; these read ILLI…AGPA, LSIE…FVGL, LLPI…HYTL, AGTG…LALL, VFLT…IAMF, QFSL…LVLN, FLML…AFAI, PVAF…VIGS, LGII…LSFV, WTHI…SIFI, and MAIL…LSFF.

Belongs to the NhaA Na(+)/H(+) (TC 2.A.33) antiporter family.

It is found in the cell inner membrane. The enzyme catalyses Na(+)(in) + 2 H(+)(out) = Na(+)(out) + 2 H(+)(in). In terms of biological role, na(+)/H(+) antiporter that extrudes sodium in exchange for external protons. The protein is Na(+)/H(+) antiporter NhaA of Dechloromonas aromatica (strain RCB).